Consider the following 224-residue polypeptide: Cytidylate kinase (224 aa).

Residue 13–21 (GPSASGKGT) coordinates ATP.

The protein belongs to the cytidylate kinase family. Type 1 subfamily.

The protein localises to the cytoplasm. It carries out the reaction CMP + ATP = CDP + ADP. It catalyses the reaction dCMP + ATP = dCDP + ADP. This is Cytidylate kinase from Nitrosomonas eutropha (strain DSM 101675 / C91 / Nm57).